The chain runs to 461 residues: tRNA modification GTPase MnmE (461 aa).

(6S)-5-formyl-5,6,7,8-tetrahydrofolate-binding residues include R27, E89, and R128. The region spanning 224–382 is the TrmE-type G domain; the sequence is GLKTAIVGRP…LEALIKKLFF (159 aa). N234 is a K(+) binding site. Residues 234–239, 253–259, and 278–281 contribute to the GTP site; these read NVGKSS, TDVAGTT, and DTAG. S238 serves as a coordination point for Mg(2+). 3 residues coordinate K(+): T253, V255, and T258. T259 provides a ligand contact to Mg(2+). K461 is a binding site for (6S)-5-formyl-5,6,7,8-tetrahydrofolate.

This sequence belongs to the TRAFAC class TrmE-Era-EngA-EngB-Septin-like GTPase superfamily. TrmE GTPase family. In terms of assembly, homodimer. Heterotetramer of two MnmE and two MnmG subunits. K(+) is required as a cofactor.

The protein localises to the cytoplasm. In terms of biological role, exhibits a very high intrinsic GTPase hydrolysis rate. Involved in the addition of a carboxymethylaminomethyl (cmnm) group at the wobble position (U34) of certain tRNAs, forming tRNA-cmnm(5)s(2)U34. The sequence is that of tRNA modification GTPase MnmE from Lactobacillus delbrueckii subsp. bulgaricus (strain ATCC BAA-365 / Lb-18).